The chain runs to 517 residues: ADP-ribosylation factor GTPase-activating protein 3 (517 aa).

Residues 10–126 enclose the Arf-GAP domain; it reads LTIFKRLRSV…IKALASQATR (117 aa). A C4-type zinc finger spans residues 25-48; the sequence is CFDCGAKNPSWASITYGVFLCIDC. The tract at residues 139 to 200 is disordered; that stretch reads VPPSSPPPKE…EQGPSVEGLN (62 aa). A compositionally biased stretch (polar residues) spans 159–176; it reads EVSSTGWASAQPEPSLTP. The residue at position 231 (Ser231) is a Phosphoserine. Positions 243–263 form a coiled coil; that stretch reads NEIEKQAQAVDKMNAQEDLLS. Residues Ser271 and Ser275 each carry the phosphoserine modification. A compositionally biased stretch (basic and acidic residues) spans 291–305; that stretch reads EKMNMSGKKKAESER. Disordered stretches follow at residues 291 to 349 and 362 to 422; these read EKMN…SDDS and MELR…QKKF. Over residues 312 to 333 the composition is skewed to polar residues; the sequence is NSRSGISHSVTSDMQTIEQETP. Position 371 is a phosphoserine (Ser371). Basic and acidic residues predominate over residues 379-390; sequence YWKKETIKDTDP. Residues Ser429, Ser452, Ser454, Ser456, Ser458, and Ser459 each carry the phosphoserine modification.

The protein localises to the cytoplasm. It localises to the golgi apparatus membrane. With respect to regulation, GAP activity stimulated by phosphatidylinositol 4,5-bisphosphate (PIP2). Its function is as follows. GTPase-activating protein (GAP) for ADP ribosylation factor 1 (ARF1). Hydrolysis of ARF1-bound GTP may lead to dissociation of coatomer from Golgi-derived membranes to allow fusion with target membranes. In Bos taurus (Bovine), this protein is ADP-ribosylation factor GTPase-activating protein 3.